Reading from the N-terminus, the 386-residue chain is Trichocyst matrix protein T2-A (386 aa).

Positions 1-19 are cleaved as a signal peptide; the sequence is MKTVILALALIVLASSTQA. The propeptide occupies 20-48; it reads DVIATIKKIDQSPFGRTLFDTIYLELQTG. Residues 51 to 154 adopt a coiled-coil conformation; sequence LDRLLSTLTD…AEEHEDFEEK (104 aa). A propeptide spanning residues 184-238 is cleaved from the precursor; sequence KGKATKQTHKFTKEVASMIQKHFTTSAKKTAKFQHRKGYSKLFKAFATIASKVEQ. The stretch at 293–332 forms a coiled coil; that stretch reads SALANATSDLASLNDIIAQVEASLDTTEQRIENVSADRHD.

Belongs to the TMP family.

It localises to the trichocyst. Functionally, structural protein that crystallize inside the trichocyst matrix. The protein is Trichocyst matrix protein T2-A (T2A) of Paramecium tetraurelia.